Reading from the N-terminus, the 554-residue chain is Perforin-1 (554 aa).

A signal peptide spans 1-20; the sequence is MATCLFLLGLFLLLPRPVPA. 3 disulfides stabilise this stretch: Cys-22/Cys-75, Cys-30/Cys-72, and Cys-101/Cys-175. Positions 26–374 constitute an MACPF domain; the sequence is TRSECKQKHK…HYIMSRARWQ (349 aa). A beta stranded membrane pass occupies residues 128-148; that stretch reads WRVGLDVNPRPEANMRASVAG. An N-linked (GlcNAc...) asparagine glycan is attached at Asn-204. 4 disulfides stabilise this stretch: Cys-241–Cys-407, Cys-376–Cys-392, Cys-380–Cys-394, and Cys-396–Cys-406. The chain crosses the membrane as a beta stranded span at residues 256–278; it reads CLNVEAQVSIGAQASVSSEYKAC. Residue Asn-375 is glycosylated (N-linked (GlcNAc...) asparagine). The EGF-like domain maps to 375–407; it reads NCSRPCRSGQHKSSHDSCQCECQDSKVTNQDCC. The C2 domain maps to 395 to 513; it reads ECQDSKVTNQ…FHEVTCELNH (119 aa). Residues Gly-428, Asp-429, Thr-432, Ala-433, Asp-435, Asn-454, Glu-467, Asp-483, Ala-484, Asp-485, Trp-488, Asp-489, Asp-490, and Asp-491 each contribute to the Ca(2+) site. Disulfide bonds link Cys-496-Cys-509 and Cys-524-Cys-533. Asn-548 carries N-linked (GlcNAc...) asparagine glycosylation.

This sequence belongs to the complement C6/C7/C8/C9 family. In terms of assembly, monomer, as soluble protein. Homooligomer; homooligomerizes to form a pore-forming ring. Ca(2+) is required as a cofactor. Post-translationally, N-glycosylated. The glycosylation sites are facing the interior of the pore. Detected in cytotoxic T-lymphocytes and natural killer cells.

Its subcellular location is the cytolytic granule. The protein resides in the secreted. The protein localises to the cell membrane. It localises to the endosome lumen. Functionally, pore-forming protein that plays a key role in granzyme-mediated programmed cell death, and in defense against virus-infected or neoplastic cells. Can insert into the membrane of target cells in its calcium-bound form, oligomerize and form large pores. Promotes cytolysis and apoptosis of target cells by mediating the passage and uptake of cytotoxic granzymes. Facilitates the delivery of cationic cargo protein, while anionic or neural proteins are not delivered efficiently. Perforin pores allow the release of mature caspase-7 (CASP7) into the extracellular milieu. This chain is Perforin-1 (Prf1), found in Mus musculus (Mouse).